Reading from the N-terminus, the 369-residue chain is tRNA-specific 2-thiouridylase MnmA (369 aa).

ATP contacts are provided by residues 12–19 and methionine 38; that span reads GMSGGVDS. The interval 98–100 is interaction with target base in tRNA; the sequence is NPD. Cysteine 103 functions as the Nucleophile in the catalytic mechanism. The cysteines at positions 103 and 200 are disulfide-linked. Position 128 (glycine 128) interacts with ATP. The interval 150-152 is interaction with tRNA; it reads KDQ. The active-site Cysteine persulfide intermediate is the cysteine 200. Residues 312-313 are interaction with tRNA; it reads RY.

The protein belongs to the MnmA/TRMU family. In terms of assembly, interacts with TusE.

It localises to the cytoplasm. The catalysed reaction is S-sulfanyl-L-cysteinyl-[protein] + uridine(34) in tRNA + AH2 + ATP = 2-thiouridine(34) in tRNA + L-cysteinyl-[protein] + A + AMP + diphosphate + H(+). Functionally, catalyzes the 2-thiolation of uridine at the wobble position (U34) of tRNA(Lys), tRNA(Glu) and tRNA(Gln), leading to the formation of s(2)U34, the first step of tRNA-mnm(5)s(2)U34 synthesis. Sulfur is provided by IscS, via a sulfur-relay system. Binds ATP and its substrate tRNAs. This is tRNA-specific 2-thiouridylase MnmA from Sodalis glossinidius (strain morsitans).